The chain runs to 434 residues: GTPase Obg (434 aa).

In terms of domain architecture, Obg spans 1-159 (MQFIDRCQIK…KTVRLELKYL (159 aa)). The OBG-type G domain occupies 160–329 (ANVGIVGYPN…LVDRVFDLYQ (170 aa)). GTP-binding positions include 166 to 173 (GYPNAGKS), 191 to 195 (FTTLV), 212 to 215 (DIPG), 282 to 285 (NKMD), and 310 to 312 (ISA). Mg(2+) contacts are provided by Ser173 and Thr193. Residues 356–434 (EKTIDDDPLD…ICDYEYLIDE (79 aa)) form the OCT domain.

The protein belongs to the TRAFAC class OBG-HflX-like GTPase superfamily. OBG GTPase family. In terms of assembly, monomer. Mg(2+) serves as cofactor.

Its subcellular location is the cytoplasm. Functionally, an essential GTPase which binds GTP, GDP and possibly (p)ppGpp with moderate affinity, with high nucleotide exchange rates and a fairly low GTP hydrolysis rate. Plays a role in control of the cell cycle, stress response, ribosome biogenesis and in those bacteria that undergo differentiation, in morphogenesis control. This is GTPase Obg from Mycoplasmoides gallisepticum (strain R(low / passage 15 / clone 2)) (Mycoplasma gallisepticum).